The chain runs to 1341 residues: uncharacterized protein (1341 aa).

A DNA-binding region (zn(2)-C6 fungal-type) is located at residues 41-68; sequence CLLCRRRKQRCDHKLPSCTACLKAGIKC. 5 stretches are compositionally biased toward low complexity: residues 72–93, 779–791, 864–906, 920–967, and 1036–1050; these read SKYS…AGTV, SNSA…SNSN, SNSS…NDNN, NHNN…GNNS, and SPSK…SSHS. Disordered stretches follow at residues 72 to 100, 770 to 804, 864 to 971, and 1031 to 1116; these read SKYS…PHPV, ISSG…MPPA, SNSS…QYVR, and TMTN…NSNP. Positions 1057 to 1076 are enriched in polar residues; it reads MTQSPTPYPQTSNMLPQQHV. Positions 1078–1090 are enriched in low complexity; sequence RPLPQQQREQPQQ. Over residues 1091–1116 the composition is skewed to polar residues; it reads HITSPQRFSESNFTNQLNNGMINSNP. S1143 is modified (phosphoserine). A compositionally biased stretch (polar residues) spans 1220-1230; sequence SQEPSSLSMDK. The interval 1220 to 1240 is disordered; it reads SQEPSSLSMDKQQQQHQQQNM.

It is found in the nucleus. This is an uncharacterized protein from Saccharomyces cerevisiae (strain ATCC 204508 / S288c) (Baker's yeast).